The chain runs to 200 residues: Dephospho-CoA kinase (200 aa).

Residues 4-200 form the DPCK domain; that stretch reads VLALTGGIAT…QLLIKIKEEG (197 aa). 12–17 contacts ATP; it reads ATGKST.

This sequence belongs to the CoaE family.

The protein resides in the cytoplasm. The catalysed reaction is 3'-dephospho-CoA + ATP = ADP + CoA + H(+). Its pathway is cofactor biosynthesis; coenzyme A biosynthesis; CoA from (R)-pantothenate: step 5/5. In terms of biological role, catalyzes the phosphorylation of the 3'-hydroxyl group of dephosphocoenzyme A to form coenzyme A. The sequence is that of Dephospho-CoA kinase from Lactobacillus acidophilus (strain ATCC 700396 / NCK56 / N2 / NCFM).